A 206-amino-acid polypeptide reads, in one-letter code: Ribosomal RNA small subunit methyltransferase G (206 aa).

S-adenosyl-L-methionine contacts are provided by residues Gly-73, Leu-78, 124 to 125 (VE), and Arg-139.

The protein belongs to the methyltransferase superfamily. RNA methyltransferase RsmG family.

It is found in the cytoplasm. It carries out the reaction guanosine(527) in 16S rRNA + S-adenosyl-L-methionine = N(7)-methylguanosine(527) in 16S rRNA + S-adenosyl-L-homocysteine. Functionally, specifically methylates the N7 position of guanine in position 527 of 16S rRNA. In Serratia proteamaculans (strain 568), this protein is Ribosomal RNA small subunit methyltransferase G.